Reading from the N-terminus, the 301-residue chain is Probable 2-oxoglutarate-dependent dioxygenase AOP1 (301 aa).

Positions 158–262 (TYYLTRLMKY…RYSTGLFSIP (105 aa)) constitute a Fe2OG dioxygenase domain. Residues His186, Asp188, and His243 each coordinate Fe cation. Arg253 is a binding site for 2-oxoglutarate.

It belongs to the iron/ascorbate-dependent oxidoreductase family. It depends on Fe(2+) as a cofactor.

Its function is as follows. Probable 2-oxoglutarate-dependent dioxygenase that may be involved in glucosinolates biosynthesis. May play a role in the production of aliphatic glucosinolates. The sequence is that of Probable 2-oxoglutarate-dependent dioxygenase AOP1 (AOP1) from Arabidopsis thaliana (Mouse-ear cress).